We begin with the raw amino-acid sequence, 127 residues long: Small ribosomal subunit protein uS11 (127 aa).

This sequence belongs to the universal ribosomal protein uS11 family. As to quaternary structure, part of the 30S ribosomal subunit. Interacts with proteins S7 and S18. Binds to IF-3.

In terms of biological role, located on the platform of the 30S subunit, it bridges several disparate RNA helices of the 16S rRNA. Forms part of the Shine-Dalgarno cleft in the 70S ribosome. The protein is Small ribosomal subunit protein uS11 of Chlorobium luteolum (strain DSM 273 / BCRC 81028 / 2530) (Pelodictyon luteolum).